The sequence spans 296 residues: Ribosomal protein L11 methyltransferase (296 aa).

Residues T151, G172, D194, and N233 each coordinate S-adenosyl-L-methionine.

The protein belongs to the methyltransferase superfamily. PrmA family.

The protein resides in the cytoplasm. It catalyses the reaction L-lysyl-[protein] + 3 S-adenosyl-L-methionine = N(6),N(6),N(6)-trimethyl-L-lysyl-[protein] + 3 S-adenosyl-L-homocysteine + 3 H(+). Its function is as follows. Methylates ribosomal protein L11. This chain is Ribosomal protein L11 methyltransferase, found in Thiobacillus denitrificans (strain ATCC 25259 / T1).